Reading from the N-terminus, the 424-residue chain is Serine--tRNA ligase (424 aa).

Threonine 230 to glutamate 232 lines the L-serine pocket. Arginine 261 to glutamate 263 contacts ATP. Glutamate 284 serves as a coordination point for L-serine. ATP is bound at residue glutamate 348–serine 351. Residue serine 384 coordinates L-serine.

It belongs to the class-II aminoacyl-tRNA synthetase family. Type-1 seryl-tRNA synthetase subfamily. Homodimer. The tRNA molecule binds across the dimer.

The protein localises to the cytoplasm. It catalyses the reaction tRNA(Ser) + L-serine + ATP = L-seryl-tRNA(Ser) + AMP + diphosphate + H(+). The catalysed reaction is tRNA(Sec) + L-serine + ATP = L-seryl-tRNA(Sec) + AMP + diphosphate + H(+). It participates in aminoacyl-tRNA biosynthesis; selenocysteinyl-tRNA(Sec) biosynthesis; L-seryl-tRNA(Sec) from L-serine and tRNA(Sec): step 1/1. Catalyzes the attachment of serine to tRNA(Ser). Is also able to aminoacylate tRNA(Sec) with serine, to form the misacylated tRNA L-seryl-tRNA(Sec), which will be further converted into selenocysteinyl-tRNA(Sec). The protein is Serine--tRNA ligase of Streptococcus pneumoniae (strain JJA).